A 102-amino-acid polypeptide reads, in one-letter code: Large ribosomal subunit protein bL21 (102 aa).

Belongs to the bacterial ribosomal protein bL21 family. Part of the 50S ribosomal subunit. Contacts protein L20.

This protein binds to 23S rRNA in the presence of protein L20. The sequence is that of Large ribosomal subunit protein bL21 from Campylobacter jejuni subsp. doylei (strain ATCC BAA-1458 / RM4099 / 269.97).